Consider the following 293-residue polypeptide: Phosphatidylserine decarboxylase proenzyme (293 aa).

Residues Asp90, His147, and Ser254 each act as charge relay system; for autoendoproteolytic cleavage activity in the active site. The active-site Schiff-base intermediate with substrate; via pyruvic acid; for decarboxylase activity is Ser254. At Ser254 the chain carries Pyruvic acid (Ser); by autocatalysis.

The protein belongs to the phosphatidylserine decarboxylase family. PSD-B subfamily. Prokaryotic type I sub-subfamily. In terms of assembly, heterodimer of a large membrane-associated beta subunit and a small pyruvoyl-containing alpha subunit. It depends on pyruvate as a cofactor. In terms of processing, is synthesized initially as an inactive proenzyme. Formation of the active enzyme involves a self-maturation process in which the active site pyruvoyl group is generated from an internal serine residue via an autocatalytic post-translational modification. Two non-identical subunits are generated from the proenzyme in this reaction, and the pyruvate is formed at the N-terminus of the alpha chain, which is derived from the carboxyl end of the proenzyme. The autoendoproteolytic cleavage occurs by a canonical serine protease mechanism, in which the side chain hydroxyl group of the serine supplies its oxygen atom to form the C-terminus of the beta chain, while the remainder of the serine residue undergoes an oxidative deamination to produce ammonia and the pyruvoyl prosthetic group on the alpha chain. During this reaction, the Ser that is part of the protease active site of the proenzyme becomes the pyruvoyl prosthetic group, which constitutes an essential element of the active site of the mature decarboxylase.

It is found in the cell membrane. It catalyses the reaction a 1,2-diacyl-sn-glycero-3-phospho-L-serine + H(+) = a 1,2-diacyl-sn-glycero-3-phosphoethanolamine + CO2. It participates in phospholipid metabolism; phosphatidylethanolamine biosynthesis; phosphatidylethanolamine from CDP-diacylglycerol: step 2/2. Catalyzes the formation of phosphatidylethanolamine (PtdEtn) from phosphatidylserine (PtdSer). This Yersinia enterocolitica serotype O:8 / biotype 1B (strain NCTC 13174 / 8081) protein is Phosphatidylserine decarboxylase proenzyme.